The primary structure comprises 78 residues: Chassatide C4 (78 aa).

Positions 1 to 23 (MAKFATQLFLLTASVVMLEVQSS) are cleaved as a signal peptide. Positions 24–42 (IVIMQDPDLGRKLIMNPAN) are cleaved as a propeptide — removed in mature form. Positions 43–71 (GASCGETCFTGICFTAGCSCNPWPTCTRN) form a cross-link, cyclopeptide (Gly-Asn). Disulfide bonds link cysteine 46–cysteine 60, cysteine 50–cysteine 62, and cysteine 55–cysteine 68. The propeptide at 72–78 (GLNPESI) is removed in mature form.

In terms of processing, this is a cyclic peptide.

Its function is as follows. Probably participates in a plant defense mechanism. In Chassalia chartacea (Chassalia curviflora), this protein is Chassatide C4.